The chain runs to 143 residues: Spliceosomal protein DIB1 (143 aa).

N-acetylalanine is present on A2.

Belongs to the DIM1 family. As to quaternary structure, component of the U4/U6-U5 tri-snRNP complex composed of the U4, U6 and U5 snRNAs and at least PRP3, PRP4, PRP6, PRP8, PRP18, PRP31, PRP38, SNU13, SNU23, SNU66, SNU114, SPP381, SMB1, SMD1, SMD2, SMD3, SMX2, SMX3, LSM2, LSM3, LSM4, LSM5, LSM6, LSM7, LSM8, BRR2 and DIB1.

Its subcellular location is the nucleus. Its function is as follows. Essential role in pre-mRNA splicing. Also essential for entry into mitosis (G2/M progression) as well as for chromosome segregation during mitosis. The protein is Spliceosomal protein DIB1 (DIB1) of Saccharomyces cerevisiae (strain ATCC 204508 / S288c) (Baker's yeast).